The primary structure comprises 313 residues: Malate dehydrogenase (313 aa).

11 to 16 (GAGHTG) provides a ligand contact to NAD(+). 2 residues coordinate substrate: arginine 86 and arginine 92. NAD(+)-binding positions include asparagine 99 and 122–124 (LTN). The substrate site is built by asparagine 124 and arginine 155. The active-site Proton acceptor is the histidine 179.

Belongs to the LDH/MDH superfamily. MDH type 3 family.

The enzyme catalyses (S)-malate + NAD(+) = oxaloacetate + NADH + H(+). Its function is as follows. Catalyzes the reversible oxidation of malate to oxaloacetate. This is Malate dehydrogenase from Staphylococcus epidermidis (strain ATCC 35984 / DSM 28319 / BCRC 17069 / CCUG 31568 / BM 3577 / RP62A).